Consider the following 178-residue polypeptide: Caveolin-1 (178 aa).

N-acetylserine is present on serine 2. Serine 2 is modified (phosphoserine). The segment at 2–94 (SGGKYVDSEG…WKASFTTFTV (93 aa)) is required for homooligomerization. At 2 to 104 (SGGKYVDSEG…TKYWFYRLLS (103 aa)) the chain is on the cytoplasmic side. At lysine 5 the chain carries N6-acetyllysine; alternate. Residue lysine 5 forms a Glycyl lysine isopeptide (Lys-Gly) (interchain with G-Cter in ubiquitin); alternate linkage. The residue at position 6 (tyrosine 6) is a Phosphotyrosine. Position 9 is a phosphoserine (serine 9). Position 14 is a phosphotyrosine; by ABL1 (tyrosine 14). The residue at position 25 (tyrosine 25) is a Phosphotyrosine. Glycyl lysine isopeptide (Lys-Gly) (interchain with G-Cter in ubiquitin) cross-links involve residues lysine 26, lysine 30, lysine 39, lysine 47, and lysine 57. The tract at residues 82 to 94 (DGIWKASFTTFTV) is interaction with CAVIN3. Residues 105 to 125 (TIFGIPMALIWGIYFAILSFL) constitute an intramembrane region (helical). The Cytoplasmic portion of the chain corresponds to 126–178 (HIWAVVPCIKSFLIEIQCISRVYSIYVHTFCDPLFEAIGKIFSNVRISMQKEI). Residues 131–142 (VPCIKSFLIEIQ) are interacts with SPRY1, SPRY2, SPRY3 and SPRY4. Residues cysteine 133, cysteine 143, and cysteine 156 are each lipidated (S-palmitoyl cysteine). Residues 149–160 (SIYVHTFCDPLF) form an interacts with SPRY1, SPRY2, and SPRY4 region. Residues 167–178 (FSNVRISMQKEI) are interacts with SPRY1, SPRY2, SPRY3 and SPRY4.

It belongs to the caveolin family. In terms of assembly, homooligomer. Interacts with GLIPR2. Interacts with NOSTRIN. Interacts with SNAP25 and STX1A. Interacts (via the N-terminus) with DPP4; the interaction is direct. Interacts with CTNNB1, CDH1 and JUP. Interacts with PACSIN2; this interaction induces membrane tubulation. Interacts with SLC7A9. Interacts with BMX and BTK. Interacts with TGFBR1. Interacts with CAVIN3 (via leucine-zipper domain) in a cholesterol-sensitive manner. Interacts with CAVIN1. Interacts with EHD2 in a cholesterol-dependent manner. Forms a ternary complex with UBXN6 and VCP; mediates CAV1 targeting to lysosomes for degradation. Interacts with ABCG1; this interaction regulates ABCG1-mediated cholesterol efflux. Interacts with NEU3; this interaction enhances NEU3 sialidase activity within caveola. Interacts (via C-terminus) with SPRY1, SPRY2 (via C-terminus), SPRY3, and SPRY4. Interacts with IGFBP5; this interaction allows trafficking of IGFBP5 from the plasma membrane to the nucleus. Post-translationally, phosphorylated at Tyr-14 by ABL1 in response to oxidative stress. In terms of processing, ubiquitinated. Undergo monoubiquitination and multi- and/or polyubiquitination. Monoubiquitination of N-terminal lysines promotes integration in a ternary complex with UBXN6 and VCP which promotes oligomeric CAV1 targeting to lysosomes for degradation. Ubiquitinated by ZNRF1; leading to degradation and modulation of the TLR4-mediated immune response.

It is found in the golgi apparatus membrane. It localises to the cell membrane. Its subcellular location is the membrane. The protein localises to the caveola. The protein resides in the membrane raft. In terms of biological role, may act as a scaffolding protein within caveolar membranes. Forms a stable heterooligomeric complex with CAV2 that targets to lipid rafts and drives caveolae formation. Mediates the recruitment of CAVIN proteins (CAVIN1/2/3/4) to the caveolae. Interacts directly with G-protein alpha subunits and can functionally regulate their activity. Involved in the costimulatory signal essential for T-cell receptor (TCR)-mediated T-cell activation. Its binding to DPP4 induces T-cell proliferation and NF-kappa-B activation in a T-cell receptor/CD3-dependent manner. Recruits CTNNB1 to caveolar membranes and may regulate CTNNB1-mediated signaling through the Wnt pathway. Negatively regulates TGFB1-mediated activation of SMAD2/3 by mediating the internalization of TGFBR1 from membrane rafts leading to its subsequent degradation. Binds 20(S)-hydroxycholesterol (20(S)-OHC). The chain is Caveolin-1 (CAV1) from Oryctolagus cuniculus (Rabbit).